Consider the following 861-residue polypeptide: Importin subunit beta-1 (861 aa).

Position 2 is an N-acetylserine (S2). HEAT repeat units follow at residues 3–35, 37–66, 90–129, 134–164, 177–208, 219–255, 260–306, 317–362, 367–395, 402–442, 452–484, 496–530, 536–586, 592–629, 634–669, 675–713, 718–764, 773–812, and 819–859; these read TAEF…LSND, FLQF…LTLK, PEAK…ELPH, ELMK…YMCE, SNNI…LADS, EGER…MSLY, KPYM…ELAQ, FALS…AQNC, LEPV…AFGS, KVQR…ADSV, LPGV…VEQL, YPAL…MVEY, AETS…VIRK, EPVA…AASL, EKYL…ISNS, RRYS…ASNI, IPYL…IVAG, FPYV…IAAM, and KQFY…KRQL. The Importin N-terminal domain maps to 25-106; it reads SETQLKKLSN…KTNALTALVS (82 aa). A Phosphoserine modification is found at S836.

The protein belongs to the importin beta family. Importin beta-1 subfamily. As to quaternary structure, forms a complex with the importin alpha subunit (SRP1/KAP60). Interacts with Ran (GSP1); interacts specifically with the GTP-bound form of Ran (GTP-Ran), protecting it from GTP hydrolysis and nucleotide exchange. Interacts with nucleoporin NUP1.

It is found in the cytoplasm. The protein localises to the nucleus. It localises to the nuclear pore complex. Functionally, importin beta subunit that functions in nuclear protein import through association with the importin alpha subunit, which binds to the classical nuclear localization signal (cNLS) in cargo substrates. Docking of the importin/substrate complex to the nuclear pore complex (NPC) is mediated by importin beta through binding to nucleoporin FxFG repeats and the complex is subsequently translocated through the pore by an energy requiring, Ran-dependent mechanism. At the nucleoplasmic side of the NPC, GTP-Ran binds to importin beta and the three components separate, leading to release of the cargo. Importin alpha and beta are re-exported from the nucleus to the cytoplasm where GTP hydrolysis releases Ran from importin beta. The directionality of nuclear import is thought to be conferred by an asymmetric distribution of the GTP- and GDP-bound forms of Ran between the cytoplasm and nucleus. Mediates the nuclear import of histones H2A and H2B. Mediates the nuclear import of transcription factor GCN4. This is Importin subunit beta-1 from Saccharomyces cerevisiae (strain ATCC 204508 / S288c) (Baker's yeast).